The following is a 257-amino-acid chain: MANSTLRRTTFFKLTTTEDEDTIPKLLQPNNNSVAFPNLKRTGKAFTNDTIKENTKKYTRPRNQFVLMRTLFNRRVNNHILQYYNKSKLEKKMFTLTSKITSELWNESSPDLKSYFSLLATLEENWHKYTHYCSWDRNSAQTLSMEPIELSQVRPRLISSLTVGAGSSVSTYTLRELLLVRKIKSRKRKTTTLTQDSSPTTKFKYKFKKQPKTKMNSNLSKLRFKSKQPPTPPEENSNVFKKRYTSENRIIEDLFLM.

The HMG box DNA-binding region spans 58-132 (YTRPRNQFVL…EENWHKYTHY (75 aa)). The tract at residues 210–239 (QPKTKMNSNLSKLRFKSKQPPTPPEENSNV) is disordered.

The protein belongs to the MATA2 family.

Its subcellular location is the nucleus. Mating type proteins are sequence specific DNA-binding proteins that act as master switches in yeast differentiation by controlling gene expression in a cell type-specific fashion. Transcriptional activator that induces the transcription of a-specific genes. In Kluyveromyces lactis (strain ATCC 8585 / CBS 2359 / DSM 70799 / NBRC 1267 / NRRL Y-1140 / WM37) (Yeast), this protein is Mating-type protein A2 (MATA2).